Reading from the N-terminus, the 113-residue chain is Dolichyl-diphosphooligosaccharide--protein glycosyltransferase subunit DAD1 (113 aa).

N-acetylserine is present on Ser-2. Residues 2 to 30 (SASVLSVISRFLEEYLSATPQRLKLLDAY) are Cytoplasmic-facing. A helical membrane pass occupies residues 31-51 (LLYILLTGALQFGYCLLVGTF). Residue Pro-52 is a topological domain, lumenal. Residues 53-73 (FNSFLSGFISCVGSFILAVCL) traverse the membrane as a helical segment. Residues 74–92 (RIQINPQNKADFQGISPER) lie on the Cytoplasmic side of the membrane. A helical transmembrane segment spans residues 93–113 (AFADFLFASTILHLVVMNFVG).

This sequence belongs to the DAD/OST2 family. As to quaternary structure, component of the oligosaccharyltransferase (OST) complex. OST exists in two different complex forms which contain common core subunits RPN1, RPN2, OST48, OST4, DAD1 and TMEM258, either STT3A or STT3B as catalytic subunits, and form-specific accessory subunits. STT3A complex assembly occurs through the formation of 3 subcomplexes. Subcomplex 1 contains RPN1 and TMEM258, subcomplex 2 contains the STT3A-specific subunits STT3A, DC2/OSTC, and KCP2 as well as the core subunit OST4, and subcomplex 3 contains RPN2, DAD1, and OST48. The STT3A complex can form stable complexes with the Sec61 complex or with both the Sec61 and TRAP complexes.

The protein resides in the endoplasmic reticulum membrane. The protein operates within protein modification; protein glycosylation. Its function is as follows. Subunit of the oligosaccharyl transferase (OST) complex that catalyzes the initial transfer of a defined glycan (Glc(3)Man(9)GlcNAc(2) in eukaryotes) from the lipid carrier dolichol-pyrophosphate to an asparagine residue within an Asn-X-Ser/Thr consensus motif in nascent polypeptide chains, the first step in protein N-glycosylation. N-glycosylation occurs cotranslationally and the complex associates with the Sec61 complex at the channel-forming translocon complex that mediates protein translocation across the endoplasmic reticulum (ER). All subunits are required for a maximal enzyme activity. The sequence is that of Dolichyl-diphosphooligosaccharide--protein glycosyltransferase subunit DAD1 from Bos taurus (Bovine).